A 259-amino-acid chain; its full sequence is MTPTTPADFVVAIPARYASTRLPGKPLQRIGDRPMIQHVTERALLAGAREVWVATDDARIAAAIEHLPGVHVAMTGAAHLSGTDRLAECARIAGWDDQTCVVNLQGDEPFAPAAGIRAVADLLQHSGAQMATLAAPVDNAHDLFDPNVVKLVRTAGGDALYFSRAPIPWHRDSFASQRDSVPAEGQWLRHIGIYAYRAGFLQRFAAMPPGMLERIESLEQLRVMEAGYRIAVAVTPEPFPPGIDTPDDLVRAQVRVASP.

This sequence belongs to the KdsB family.

It localises to the cytoplasm. It catalyses the reaction 3-deoxy-alpha-D-manno-oct-2-ulosonate + CTP = CMP-3-deoxy-beta-D-manno-octulosonate + diphosphate. The protein operates within nucleotide-sugar biosynthesis; CMP-3-deoxy-D-manno-octulosonate biosynthesis; CMP-3-deoxy-D-manno-octulosonate from 3-deoxy-D-manno-octulosonate and CTP: step 1/1. It participates in bacterial outer membrane biogenesis; lipopolysaccharide biosynthesis. Activates KDO (a required 8-carbon sugar) for incorporation into bacterial lipopolysaccharide in Gram-negative bacteria. The polypeptide is 3-deoxy-manno-octulosonate cytidylyltransferase (Xanthomonas euvesicatoria pv. vesicatoria (strain 85-10) (Xanthomonas campestris pv. vesicatoria)).